The sequence spans 94 residues: Large ribosomal subunit protein bL27 (94 aa).

The disordered stretch occupies residues 1-25; it reads MAHKKGTGSTRNGRDSQSKRLGVKR.

It belongs to the bacterial ribosomal protein bL27 family.

This Gloeothece citriformis (strain PCC 7424) (Cyanothece sp. (strain PCC 7424)) protein is Large ribosomal subunit protein bL27.